The chain runs to 134 residues: Large ribosomal subunit protein bL17 (134 aa).

The protein belongs to the bacterial ribosomal protein bL17 family. As to quaternary structure, part of the 50S ribosomal subunit. Contacts protein L32.

The protein is Large ribosomal subunit protein bL17 of Aromatoleum aromaticum (strain DSM 19018 / LMG 30748 / EbN1) (Azoarcus sp. (strain EbN1)).